The chain runs to 523 residues: 2-isopropylmalate synthase (523 aa).

One can recognise a Pyruvate carboxyltransferase domain in the interval 5–267; sequence VIIFDTTLRD…ETGINAKEIH (263 aa). The Mn(2+) site is built by Asp-14, His-202, His-204, and Asn-238. The segment at 392–523 is regulatory domain; sequence KLQQLVVHSD…QQNKRELGGV (132 aa).

This sequence belongs to the alpha-IPM synthase/homocitrate synthase family. LeuA type 1 subfamily. In terms of assembly, homodimer. Requires Mn(2+) as cofactor.

The protein resides in the cytoplasm. It catalyses the reaction 3-methyl-2-oxobutanoate + acetyl-CoA + H2O = (2S)-2-isopropylmalate + CoA + H(+). The protein operates within amino-acid biosynthesis; L-leucine biosynthesis; L-leucine from 3-methyl-2-oxobutanoate: step 1/4. Functionally, catalyzes the condensation of the acetyl group of acetyl-CoA with 3-methyl-2-oxobutanoate (2-ketoisovalerate) to form 3-carboxy-3-hydroxy-4-methylpentanoate (2-isopropylmalate). This is 2-isopropylmalate synthase from Shewanella pealeana (strain ATCC 700345 / ANG-SQ1).